The following is a 550-amino-acid chain: Chaperonin GroEL (550 aa).

Residues 30–33, lysine 51, 87–91, glycine 415, and aspartate 495 each bind ATP; these read TLGP and DGTTT.

This sequence belongs to the chaperonin (HSP60) family. As to quaternary structure, forms a cylinder of 14 subunits composed of two heptameric rings stacked back-to-back. Interacts with the co-chaperonin GroES.

The protein resides in the cytoplasm. It catalyses the reaction ATP + H2O + a folded polypeptide = ADP + phosphate + an unfolded polypeptide.. Its function is as follows. Together with its co-chaperonin GroES, plays an essential role in assisting protein folding. The GroEL-GroES system forms a nano-cage that allows encapsulation of the non-native substrate proteins and provides a physical environment optimized to promote and accelerate protein folding. In Shewanella piezotolerans (strain WP3 / JCM 13877), this protein is Chaperonin GroEL.